A 250-amino-acid polypeptide reads, in one-letter code: Alpha/beta hydrolase nvfD (250 aa).

Active-site charge relay system residues include aspartate 198 and histidine 226.

Belongs to the AB hydrolase superfamily.

Its pathway is secondary metabolite biosynthesis; terpenoid biosynthesis. In terms of biological role, alpha/beta hydrolase; part of the gene cluster that mediates the biosynthesis of novofumigatonin, a heavily oxygenated meroterpenoid containing a unique orthoester moiety. The first step of the pathway is the synthesis of 3,5-dimethylorsellinic acid (DMOA) by the polyketide synthase nvfA via condensation of one acetyl-CoA starter unit with 3 malonyl-CoA units and 2 methylations. DMOA is then converted to farnesyl-DMOA by the farnesyltransferase nvfB. Epoxydation by FAD-dependent monooxygenase nvfK, followed by a protonation-initiated cyclization catalyzed by the terpene cyclase nvfL leads to the production of asnavolin H. The short chain dehydrogenase nvfC then as a 3-OH dehydrogenase of asnovolin H to yield chemesin D. There are two branches to synthesize asnovolin A from chemesin D. In one branch, chemesin D undergoes Baeyer-Villiger oxidation by nvfH, methylation by nvfJ, and enoyl reduction by the nvfM D enoylreductase that reduces the double bond between C-5'and C-6', to form respectively asnovolin I, asnovolin K, and asnovolin A. In the other branch, the methylation precedes the Baeyer-Villiger oxidation and the enoyl reduction to yield asnovolin A via the asnovolin J intermediate. Asnovolin A is further converted to fumigatonoid A by the Fe(II)/2-oxoglutarate-dependent dioxygenase nvfI that catalyzes an endoperoxidation reaction. The alpha/beta hydrolase nvfD then acts as an epimerase that converts fumigatonoid A to its C-5' epimer, which then undergoes spontaneous or nvfD-catalyzed lactonization. The following step utilizes the ketoreductase nvfG to produce fumigatonoid B. The dioxygenase nvfE further converts fumigatonoid B into fumigatonoid C. Finally the Fe(II)/2-oxoglutarate-dependent dioxygenase nvfF catalyzes two rounds of oxidation to transform fumigatonoid C into the end product, novofumigatonin A. The sequence is that of Alpha/beta hydrolase nvfD from Aspergillus novofumigatus (strain IBT 16806).